We begin with the raw amino-acid sequence, 126 residues long: Aspartate 1-decarboxylase (126 aa).

Catalysis depends on Ser25, which acts as the Schiff-base intermediate with substrate; via pyruvic acid. Pyruvic acid (Ser) is present on Ser25. Residue Thr57 coordinates substrate. Tyr58 acts as the Proton donor in catalysis. 73 to 75 contributes to the substrate binding site; it reads GAA.

This sequence belongs to the PanD family. In terms of assembly, heterooctamer of four alpha and four beta subunits. It depends on pyruvate as a cofactor. In terms of processing, is synthesized initially as an inactive proenzyme, which is activated by self-cleavage at a specific serine bond to produce a beta-subunit with a hydroxyl group at its C-terminus and an alpha-subunit with a pyruvoyl group at its N-terminus.

Its subcellular location is the cytoplasm. The catalysed reaction is L-aspartate + H(+) = beta-alanine + CO2. The protein operates within cofactor biosynthesis; (R)-pantothenate biosynthesis; beta-alanine from L-aspartate: step 1/1. In terms of biological role, catalyzes the pyruvoyl-dependent decarboxylation of aspartate to produce beta-alanine. The sequence is that of Aspartate 1-decarboxylase from Nitrosococcus oceani (strain ATCC 19707 / BCRC 17464 / JCM 30415 / NCIMB 11848 / C-107).